The primary structure comprises 111 residues: Disintegrin DS-AS (111 aa).

A signal peptide spans 1 to 20 (MIQVLLVIICLAVFPYQGSC). Positions 21–47 (IILESGNVNDYEIVYPKKLIVLPTGAM) are excised as a propeptide. The region spanning 47–111 (MNSPHPCCDP…PDCPRNPYKD (65 aa)) is the Disintegrin domain. 4 disulfides stabilise this stretch: C53–C76, C67–C73, C72–C97, and C85–C104. The Cell attachment site motif lies at 89 to 91 (RGD).

In terms of assembly, heterodimer; disulfide-linked.

It is found in the secreted. Its function is as follows. Inhibits ADP-induced platelet aggregation in human platelet-rich plasma (IC(50) is 8 uM). The protein is Disintegrin DS-AS of Atheris squamigera (Variable bush viper).